Here is a 241-residue protein sequence, read N- to C-terminus: Proteasome subunit alpha (241 aa).

This sequence belongs to the peptidase T1A family. In terms of assembly, the 20S proteasome core is composed of 14 alpha and 14 beta subunits that assemble into four stacked heptameric rings, resulting in a barrel-shaped structure. The two inner rings, each composed of seven catalytic beta subunits, are sandwiched by two outer rings, each composed of seven alpha subunits. The catalytic chamber with the active sites is on the inside of the barrel. Has a gated structure, the ends of the cylinder being occluded by the N-termini of the alpha-subunits. Is capped at one or both ends by the proteasome regulatory ATPase, PAN.

The protein resides in the cytoplasm. Its activity is regulated as follows. The formation of the proteasomal ATPase PAN-20S proteasome complex, via the docking of the C-termini of PAN into the intersubunit pockets in the alpha-rings, triggers opening of the gate for substrate entry. Interconversion between the open-gate and close-gate conformations leads to a dynamic regulation of the 20S proteasome proteolysis activity. In terms of biological role, component of the proteasome core, a large protease complex with broad specificity involved in protein degradation. This is Proteasome subunit alpha from Saccharolobus islandicus (strain M.16.4 / Kamchatka #3) (Sulfolobus islandicus).